Consider the following 312-residue polypeptide: tRNA dimethylallyltransferase (312 aa).

Gly-11 to Ser-18 is an ATP binding site. Residue Thr-13–Ser-18 coordinates substrate. Interaction with substrate tRNA stretches follow at residues Asp-36–Thr-39, Gln-160–Arg-164, and Arg-243–Arg-248.

It belongs to the IPP transferase family. In terms of assembly, monomer. Requires Mg(2+) as cofactor.

The enzyme catalyses adenosine(37) in tRNA + dimethylallyl diphosphate = N(6)-dimethylallyladenosine(37) in tRNA + diphosphate. In terms of biological role, catalyzes the transfer of a dimethylallyl group onto the adenine at position 37 in tRNAs that read codons beginning with uridine, leading to the formation of N6-(dimethylallyl)adenosine (i(6)A). This Bordetella avium (strain 197N) protein is tRNA dimethylallyltransferase.